The sequence spans 301 residues: GTPase Era (301 aa).

The Era-type G domain occupies 7–175 (YCGFIAIVGR…AGIVRKHLPE (169 aa)). The segment at 15–22 (GRPNVGKS) is G1. Residue 15–22 (GRPNVGKS) coordinates GTP. The G2 stretch occupies residues 41–45 (QTTRH). The tract at residues 62–65 (DTPG) is G3. GTP is bound by residues 62–66 (DTPGL) and 124–127 (NKVD). The segment at 124–127 (NKVD) is G4. The interval 154 to 156 (ISA) is G5. One can recognise a KH type-2 domain in the interval 206 to 283 (LGAELPYSVT…HLELWVKVKS (78 aa)).

It belongs to the TRAFAC class TrmE-Era-EngA-EngB-Septin-like GTPase superfamily. Era GTPase family. As to quaternary structure, monomer.

It is found in the cytoplasm. Its subcellular location is the cell inner membrane. An essential GTPase that binds both GDP and GTP, with rapid nucleotide exchange. Plays a role in 16S rRNA processing and 30S ribosomal subunit biogenesis and possibly also in cell cycle regulation and energy metabolism. This is GTPase Era from Salmonella agona (strain SL483).